The following is a 262-amino-acid chain: MFPKKNRPMIANGDRVLKDAFKDVGKYIELPARRAFLQRSMTLGGLSLLTGCAITDDESVESALLAMSRFNNCVQGWLFDPNQLAPIYPESMITRPFPFNAYYGDDEVREVDAASFRLEVSGLVSDKHAWTLDELHALPQVDQVTRHICVEGWSAIGKWSGVPFTTFLRLVGADLDAKYVGFKCADDYYTSIDMATALHPQTQLTLSYDGQTLPARYGFPMKLRMPTKLGYKNPKYIQALFVTNSYPGGYWEDQGYNWFGGS.

Belongs to the MsrP family.

Its function is as follows. Part of the YedY1-YedZ1 system that may repair oxidized proteins containing methionine sulfoxide residues (Met-O). In Azospira oryzae (strain ATCC BAA-33 / DSM 13638 / PS) (Dechlorosoma suillum), this protein is Putative protein-methionine-sulfoxide reductase subunit YedZ1.